We begin with the raw amino-acid sequence, 92 residues long: Small ribosomal subunit protein uS19c (92 aa).

This sequence belongs to the universal ribosomal protein uS19 family.

It is found in the plastid. Its subcellular location is the chloroplast. In terms of biological role, protein S19 forms a complex with S13 that binds strongly to the 16S ribosomal RNA. The sequence is that of Small ribosomal subunit protein uS19c (rps19) from Trieres chinensis (Marine centric diatom).